A 24-amino-acid polypeptide reads, in one-letter code: VVAAGANPVLITRDLVNVLEDAIR.

The protein belongs to the chaperonin (HSP60) family. Oligomer of probably six alpha and six beta subunits.

It is found in the plastid. The protein localises to the chloroplast. This protein binds RuBisCO small and large subunits and is implicated in the assembly of the enzyme oligomer. This is RuBisCO large subunit-binding protein subunit beta, chloroplastic from Populus euphratica (Euphrates poplar).